The following is a 146-amino-acid chain: Large ribosomal subunit protein uL11 (146 aa).

It belongs to the universal ribosomal protein uL11 family. Part of the ribosomal stalk of the 50S ribosomal subunit. Interacts with L10 and the large rRNA to form the base of the stalk. L10 forms an elongated spine to which L12 dimers bind in a sequential fashion forming a multimeric L10(L12)X complex. In terms of processing, one or more lysine residues are methylated.

In terms of biological role, forms part of the ribosomal stalk which helps the ribosome interact with GTP-bound translation factors. This chain is Large ribosomal subunit protein uL11, found in Blochmanniella floridana.